Consider the following 134-residue polypeptide: MPTIQQLIRQERELLKRKTKSPALKGCPQRRGVCTRVYTTTPKKPNSALRKVARVRLTSGFEVTAYIPGIGHNLQEHSVVMIRGGRVKDLPGVRYHIIRGTLDTAGVKDRKQGRSKYGAKRPKPGEAAATGKKK.

Aspartate 89 carries the 3-methylthioaspartic acid modification. A disordered region spans residues 103-134 (DTAGVKDRKQGRSKYGAKRPKPGEAAATGKKK). Basic residues predominate over residues 113 to 122 (GRSKYGAKRP).

The protein belongs to the universal ribosomal protein uS12 family. Part of the 30S ribosomal subunit. Contacts proteins S8 and S17. May interact with IF1 in the 30S initiation complex.

Functionally, with S4 and S5 plays an important role in translational accuracy. Interacts with and stabilizes bases of the 16S rRNA that are involved in tRNA selection in the A site and with the mRNA backbone. Located at the interface of the 30S and 50S subunits, it traverses the body of the 30S subunit contacting proteins on the other side and probably holding the rRNA structure together. The combined cluster of proteins S8, S12 and S17 appears to hold together the shoulder and platform of the 30S subunit. The chain is Small ribosomal subunit protein uS12 from Thermosynechococcus vestitus (strain NIES-2133 / IAM M-273 / BP-1).